A 324-amino-acid chain; its full sequence is Acetyl-coenzyme A carboxylase carboxyl transferase subunit alpha (324 aa).

Positions 44–298 (ILQRKLLNLK…KNKIRDQLDF (255 aa)) constitute a CoA carboxyltransferase C-terminal domain.

It belongs to the AccA family. As to quaternary structure, acetyl-CoA carboxylase is a heterohexamer composed of biotin carboxyl carrier protein (accB), biotin carboxylase (accC) and two subunits each of ACCase subunit alpha (accA) and ACCase subunit beta (accD).

The protein localises to the plastid. Its subcellular location is the chloroplast. It carries out the reaction N(6)-carboxybiotinyl-L-lysyl-[protein] + acetyl-CoA = N(6)-biotinyl-L-lysyl-[protein] + malonyl-CoA. It functions in the pathway lipid metabolism; malonyl-CoA biosynthesis; malonyl-CoA from acetyl-CoA: step 1/1. Functionally, component of the acetyl coenzyme A carboxylase (ACC) complex. First, biotin carboxylase catalyzes the carboxylation of biotin on its carrier protein (BCCP) and then the CO(2) group is transferred by the carboxyltransferase to acetyl-CoA to form malonyl-CoA. The protein is Acetyl-coenzyme A carboxylase carboxyl transferase subunit alpha of Cyanidium caldarium (Red alga).